Reading from the N-terminus, the 37-residue chain is Large ribosomal subunit protein bL36 (37 aa).

It belongs to the bacterial ribosomal protein bL36 family.

The chain is Large ribosomal subunit protein bL36 from Treponema pallidum (strain Nichols).